The primary structure comprises 444 residues: Methylenetetrahydrofolate--tRNA-(uracil-5-)-methyltransferase TrmFO (444 aa).

FAD is bound at residue G10–G15.

Belongs to the MnmG family. TrmFO subfamily. It depends on FAD as a cofactor.

It is found in the cytoplasm. The catalysed reaction is uridine(54) in tRNA + (6R)-5,10-methylene-5,6,7,8-tetrahydrofolate + NADH + H(+) = 5-methyluridine(54) in tRNA + (6S)-5,6,7,8-tetrahydrofolate + NAD(+). The enzyme catalyses uridine(54) in tRNA + (6R)-5,10-methylene-5,6,7,8-tetrahydrofolate + NADPH + H(+) = 5-methyluridine(54) in tRNA + (6S)-5,6,7,8-tetrahydrofolate + NADP(+). Functionally, catalyzes the folate-dependent formation of 5-methyl-uridine at position 54 (M-5-U54) in all tRNAs. The polypeptide is Methylenetetrahydrofolate--tRNA-(uracil-5-)-methyltransferase TrmFO (Streptococcus suis (strain 98HAH33)).